The primary structure comprises 333 residues: Glycerol-3-phosphate dehydrogenase [NAD(P)+] (333 aa).

Residues Trp11, Arg30, and Lys105 each contribute to the NADPH site. The sn-glycerol 3-phosphate site is built by Lys105, Gly133, and Ser135. Ala137 lines the NADPH pocket. Positions 188, 241, 251, 252, and 253 each coordinate sn-glycerol 3-phosphate. Lys188 functions as the Proton acceptor in the catalytic mechanism. Arg252 is a binding site for NADPH. NADPH is bound by residues Val276 and Glu278.

It belongs to the NAD-dependent glycerol-3-phosphate dehydrogenase family.

Its subcellular location is the cytoplasm. The enzyme catalyses sn-glycerol 3-phosphate + NAD(+) = dihydroxyacetone phosphate + NADH + H(+). It catalyses the reaction sn-glycerol 3-phosphate + NADP(+) = dihydroxyacetone phosphate + NADPH + H(+). It participates in membrane lipid metabolism; glycerophospholipid metabolism. Its function is as follows. Catalyzes the reduction of the glycolytic intermediate dihydroxyacetone phosphate (DHAP) to sn-glycerol 3-phosphate (G3P), the key precursor for phospholipid synthesis. The polypeptide is Glycerol-3-phosphate dehydrogenase [NAD(P)+] (Methylibium petroleiphilum (strain ATCC BAA-1232 / LMG 22953 / PM1)).